Consider the following 158-residue polypeptide: Glutathione peroxidase homolog BsaA (158 aa).

Thr36 is a catalytic residue.

The protein belongs to the glutathione peroxidase family.

This is Glutathione peroxidase homolog BsaA (bsaA) from Staphylococcus epidermidis (strain ATCC 35984 / DSM 28319 / BCRC 17069 / CCUG 31568 / BM 3577 / RP62A).